The following is a 340-amino-acid chain: Arginase 1, mitochondrial (340 aa).

The transit peptide at 1-24 (MGGVAAGTRWIHHVRRLSAAKVST) directs the protein to the mitochondrion. Residues histidine 159, aspartate 183, histidine 185, and aspartate 187 each coordinate Mn(2+). Residues 185 to 189 (HPDIY) and 193 to 195 (EGN) each bind substrate. Positions 268 and 270 each coordinate Mn(2+). Residue glutamate 311 participates in substrate binding.

The protein belongs to the arginase family. It depends on Mn(2+) as a cofactor.

It localises to the mitochondrion. It catalyses the reaction L-arginine + H2O = urea + L-ornithine. The protein operates within nitrogen metabolism; urea cycle; L-ornithine and urea from L-arginine: step 1/1. Catalyzes the hydrolysis of L-arginine to urea and L-ornithine. The latter can be utilized in the urea cycle or as a precursor for the synthesis of both polyamines and proline. This is Arginase 1, mitochondrial from Oryza sativa subsp. indica (Rice).